A 430-amino-acid chain; its full sequence is Phosphoglucosamine mutase (430 aa).

The Phosphoserine intermediate role is filled by Ser93. Mg(2+) contacts are provided by Ser93, Asp227, Asp229, and Asp231. Ser93 is subject to Phosphoserine.

This sequence belongs to the phosphohexose mutase family. Mg(2+) is required as a cofactor. Post-translationally, activated by phosphorylation.

It carries out the reaction alpha-D-glucosamine 1-phosphate = D-glucosamine 6-phosphate. Catalyzes the conversion of glucosamine-6-phosphate to glucosamine-1-phosphate. The polypeptide is Phosphoglucosamine mutase (Thermosipho africanus (strain TCF52B)).